The following is a 295-amino-acid chain: 4-hydroxy-tetrahydrodipicolinate synthase 1 (295 aa).

Residue Thr-46 participates in pyruvate binding. The active-site Proton donor/acceptor is Tyr-134. Lys-162 (schiff-base intermediate with substrate) is an active-site residue. Val-204 contributes to the pyruvate binding site.

Belongs to the DapA family. As to quaternary structure, homotetramer; dimer of dimers.

The protein localises to the cytoplasm. The enzyme catalyses L-aspartate 4-semialdehyde + pyruvate = (2S,4S)-4-hydroxy-2,3,4,5-tetrahydrodipicolinate + H2O + H(+). It participates in amino-acid biosynthesis; L-lysine biosynthesis via DAP pathway; (S)-tetrahydrodipicolinate from L-aspartate: step 3/4. Functionally, catalyzes the condensation of (S)-aspartate-beta-semialdehyde [(S)-ASA] and pyruvate to 4-hydroxy-tetrahydrodipicolinate (HTPA). This Halalkalibacterium halodurans (strain ATCC BAA-125 / DSM 18197 / FERM 7344 / JCM 9153 / C-125) (Bacillus halodurans) protein is 4-hydroxy-tetrahydrodipicolinate synthase 1.